Reading from the N-terminus, the 300-residue chain is uncharacterized protein (300 aa).

3 Solcar repeats span residues 10 to 101, 119 to 199, and 212 to 294; these read ESQT…VKDF, GKAI…AKEY, and FQNF…LIPF. The next 6 membrane-spanning stretches (helical) occupy residues 16–36, 70–86, 121–141, 178–198, 215–235, and 275–295; these read IVGS…VDTI, ATSL…YKIV, AIMH…LLPL, TAAR…FAKE, FFTS…LDVI, and LTTG…IPFF.

The protein belongs to the mitochondrial carrier (TC 2.A.29) family.

It localises to the mitochondrion inner membrane. This is an uncharacterized protein from Schizosaccharomyces pombe (strain 972 / ATCC 24843) (Fission yeast).